Reading from the N-terminus, the 156-residue chain is MNLNATILGQAIAFVLFVLFCMKYVWPPLMAAIEKRQKEIADGLASAERAHKDLDLAKASATDQLKKAKAEAQVIIEQANKRRAQILDEAKTEAEQERTKIVAQAQAEIDAERKRAREELRKQVAILAVAGAEKIIERSVDEAANSDIVDKLVAEL.

A helical membrane pass occupies residues 11–31 (AIAFVLFVLFCMKYVWPPLMA).

The protein belongs to the ATPase B chain family. As to quaternary structure, F-type ATPases have 2 components, F(1) - the catalytic core - and F(0) - the membrane proton channel. F(1) has five subunits: alpha(3), beta(3), gamma(1), delta(1), epsilon(1). F(0) has three main subunits: a(1), b(2) and c(10-14). The alpha and beta chains form an alternating ring which encloses part of the gamma chain. F(1) is attached to F(0) by a central stalk formed by the gamma and epsilon chains, while a peripheral stalk is formed by the delta and b chains.

The protein resides in the cell inner membrane. F(1)F(0) ATP synthase produces ATP from ADP in the presence of a proton or sodium gradient. F-type ATPases consist of two structural domains, F(1) containing the extramembraneous catalytic core and F(0) containing the membrane proton channel, linked together by a central stalk and a peripheral stalk. During catalysis, ATP synthesis in the catalytic domain of F(1) is coupled via a rotary mechanism of the central stalk subunits to proton translocation. In terms of biological role, component of the F(0) channel, it forms part of the peripheral stalk, linking F(1) to F(0). The polypeptide is ATP synthase subunit b (Citrobacter koseri (strain ATCC BAA-895 / CDC 4225-83 / SGSC4696)).